The sequence spans 262 residues: Zinc import ATP-binding protein ZnuC (262 aa).

The 216-residue stretch at 5 to 220 folds into the ABC transporter domain; that stretch reads VSLEQLCVEF…PSYIALFGNA (216 aa). 37–44 is a binding site for ATP; that stretch reads GPNGAGKS. The tract at residues 236–262 is disordered; it reads HHDLSGSPVSGDATSCSNHNHGHHHHD.

It belongs to the ABC transporter superfamily. Zinc importer (TC 3.A.1.15.5) family. In terms of assembly, the complex is composed of two ATP-binding proteins (ZnuC), two transmembrane proteins (ZnuB) and a solute-binding protein (ZnuA).

It localises to the cell inner membrane. The enzyme catalyses Zn(2+)(out) + ATP(in) + H2O(in) = Zn(2+)(in) + ADP(in) + phosphate(in) + H(+)(in). Part of the ABC transporter complex ZnuABC involved in zinc import. Responsible for energy coupling to the transport system. This Vibrio parahaemolyticus serotype O3:K6 (strain RIMD 2210633) protein is Zinc import ATP-binding protein ZnuC.